The sequence spans 274 residues: Diaminopimelate epimerase (274 aa).

Positions 11 and 60 each coordinate substrate. C69 functions as the Proton donor in the catalytic mechanism. Residues 70 to 71 (GN), N191, and 209 to 210 (ER) each bind substrate. Residue C218 is the Proton acceptor of the active site. 219-220 (GS) contacts substrate.

It belongs to the diaminopimelate epimerase family. In terms of assembly, homodimer.

It localises to the cytoplasm. It carries out the reaction (2S,6S)-2,6-diaminopimelate = meso-2,6-diaminopimelate. Its pathway is amino-acid biosynthesis; L-lysine biosynthesis via DAP pathway; DL-2,6-diaminopimelate from LL-2,6-diaminopimelate: step 1/1. Catalyzes the stereoinversion of LL-2,6-diaminopimelate (L,L-DAP) to meso-diaminopimelate (meso-DAP), a precursor of L-lysine and an essential component of the bacterial peptidoglycan. The chain is Diaminopimelate epimerase from Caldanaerobacter subterraneus subsp. tengcongensis (strain DSM 15242 / JCM 11007 / NBRC 100824 / MB4) (Thermoanaerobacter tengcongensis).